A 209-amino-acid chain; its full sequence is Glutathione S-transferase 1-1 (209 aa).

Positions Met-1–Asp-81 constitute a GST N-terminal domain. Residues His-51–Ile-53 and Glu-65–Arg-67 each bind glutathione. Residues Cys-87–Glu-209 form the GST C-terminal domain.

This sequence belongs to the GST superfamily. Theta family. In terms of assembly, homodimer.

It catalyses the reaction RX + glutathione = an S-substituted glutathione + a halide anion + H(+). In terms of biological role, conjugation of reduced glutathione to a wide number of exogenous and endogenous hydrophobic electrophiles. The protein is Glutathione S-transferase 1-1 (GstD1) of Drosophila yakuba (Fruit fly).